The chain runs to 944 residues: E3 ubiquitin-protein ligase HACE1 (944 aa).

ANK repeat units follow at residues 23–55, 64–93, 97–126, 130–159, 163–192, 196–226, and 228–253; these read LPED…NSKF, VKRS…DPNY, SGCT…DVNI, EGLT…NVDV, MGQT…DINR, SGAT…YLPD, and NGVT…QHHP. Residues 609-944 enclose the HECT domain; sequence NCEKLKQGIA…HCGSYGYTMA (336 aa). C911 serves as the catalytic Glycyl thioester intermediate.

The protein localises to the golgi apparatus. It is found in the golgi stack membrane. The protein resides in the cytoplasm. It localises to the endoplasmic reticulum. It catalyses the reaction S-ubiquitinyl-[E2 ubiquitin-conjugating enzyme]-L-cysteine + [acceptor protein]-L-lysine = [E2 ubiquitin-conjugating enzyme]-L-cysteine + N(6)-ubiquitinyl-[acceptor protein]-L-lysine.. It functions in the pathway protein modification; protein ubiquitination. Its function is as follows. E3 ubiquitin-protein ligase involved in Golgi membrane fusion and regulation of small GTPases. Acts as a regulator of Golgi membrane dynamics during the cell cycle: recruited to Golgi membrane by Rab proteins and regulates postmitotic Golgi membrane fusion. Acts by mediating ubiquitination during mitotic Golgi disassembly, ubiquitination serving as a signal for Golgi reassembly later, after cell division. This Xenopus laevis (African clawed frog) protein is E3 ubiquitin-protein ligase HACE1 (hace1).